Here is a 411-residue protein sequence, read N- to C-terminus: Actin-like protein 9 (411 aa).

Residues 1–15 are compositionally biased toward basic and acidic residues; sequence MDVNGPKRWEPHRSL. The tract at residues 1–23 is disordered; it reads MDVNGPKRWEPHRSLDLNPRSTP.

This sequence belongs to the actin family. In terms of assembly, interacts with ACTL7A.

The protein localises to the cytoplasmic vesicle. It localises to the secretory vesicle. The protein resides in the acrosome. It is found in the cytoplasm. Its subcellular location is the cytoskeleton. The protein localises to the perinuclear theca. Its function is as follows. Testis-specic protein that plays an important role in fusion of proacrosomal vesicles and perinuclear theca formation. In Rattus norvegicus (Rat), this protein is Actin-like protein 9 (Actl9).